A 158-amino-acid chain; its full sequence is Protein SREK1IP1 (158 aa).

Disordered regions lie at residues 1–20 and 45–158; these read MAAP…RCGY and SSTS…SDTD. The segment at 13-30 adopts a CCHC-type zinc-finger fold; sequence AGCKRCGYPGHLTFECRN. A compositionally biased stretch (basic and acidic residues) spans 59–79; that stretch reads ALSKEKIFGSHSKGSQEDSRK. 2 stretches are compositionally biased toward basic residues: residues 80–98 and 111–140; these read EKHK…KKRS and KKKK…KQKK. The span at 145-158 shows a compositional bias: low complexity; sequence SSSSDSSSESSDTD.

Possible splicing regulator involved in the control of cellular survival. The polypeptide is Protein SREK1IP1 (srek1ip1) (Danio rerio (Zebrafish)).